Reading from the N-terminus, the 61-residue chain is Small ribosomal subunit protein uS14 (61 aa).

C24, C27, C40, and C43 together coordinate Zn(2+).

Belongs to the universal ribosomal protein uS14 family. Zinc-binding uS14 subfamily. In terms of assembly, part of the 30S ribosomal subunit. Contacts proteins S3 and S10. The cofactor is Zn(2+).

Functionally, binds 16S rRNA, required for the assembly of 30S particles and may also be responsible for determining the conformation of the 16S rRNA at the A site. The chain is Small ribosomal subunit protein uS14 from Rubrobacter xylanophilus (strain DSM 9941 / JCM 11954 / NBRC 16129 / PRD-1).